The sequence spans 181 residues: Cytochrome c oxidase subunit 2 (181 aa).

5 residues coordinate Cu cation: Cys-126, Glu-128, Cys-130, His-134, and Met-137. Glu-128 is a Mg(2+) binding site.

It belongs to the cytochrome c oxidase subunit 2 family. As to quaternary structure, component of the cytochrome c oxidase (complex IV, CIV), a multisubunit enzyme composed of a catalytic core of 3 subunits and several supernumerary subunits. The complex exists as a monomer or a dimer and forms supercomplexes (SCs) in the inner mitochondrial membrane with ubiquinol-cytochrome c oxidoreductase (cytochrome b-c1 complex, complex III, CIII). Requires Cu cation as cofactor.

It localises to the mitochondrion inner membrane. The enzyme catalyses 4 Fe(II)-[cytochrome c] + O2 + 8 H(+)(in) = 4 Fe(III)-[cytochrome c] + 2 H2O + 4 H(+)(out). Its function is as follows. Component of the cytochrome c oxidase, the last enzyme in the mitochondrial electron transport chain which drives oxidative phosphorylation. The respiratory chain contains 3 multisubunit complexes succinate dehydrogenase (complex II, CII), ubiquinol-cytochrome c oxidoreductase (cytochrome b-c1 complex, complex III, CIII) and cytochrome c oxidase (complex IV, CIV), that cooperate to transfer electrons derived from NADH and succinate to molecular oxygen, creating an electrochemical gradient over the inner membrane that drives transmembrane transport and the ATP synthase. Cytochrome c oxidase is the component of the respiratory chain that catalyzes the reduction of oxygen to water. Electrons originating from reduced cytochrome c in the intermembrane space (IMS) are transferred via the dinuclear copper A center (CU(A)) of subunit 2 and heme A of subunit 1 to the active site in subunit 1, a binuclear center (BNC) formed by heme A3 and copper B (CU(B)). The BNC reduces molecular oxygen to 2 water molecules using 4 electrons from cytochrome c in the IMS and 4 protons from the mitochondrial matrix. This Paramecium primaurelia protein is Cytochrome c oxidase subunit 2 (COII).